Reading from the N-terminus, the 336-residue chain is D-aspartate oxidase (336 aa).

Positions 34, 35, 41, 42, 304, 308, and 309 each coordinate FAD. Residues 334–336 (SKL) carry the Microbody targeting signal motif.

Belongs to the DAMOX/DASOX family. As to quaternary structure, monomer. FAD serves as cofactor.

It localises to the peroxisome matrix. It carries out the reaction D-aspartate + O2 + H2O = oxaloacetate + H2O2 + NH4(+). The enzyme catalyses D-glutamate + O2 + H2O = H2O2 + 2-oxoglutarate + NH4(+). In terms of biological role, selectively catalyzes the oxidative deamination of acidic amino acids. Suppresses the level of D-aspartate in the brain, an amino acid that can act as an agonist for glutamate receptors. Protects the organism from the toxicity of D-amino acids. May also function in the intestine. In Octopus vulgaris (Common octopus), this protein is D-aspartate oxidase.